We begin with the raw amino-acid sequence, 115 residues long: uncharacterized protein (115 aa).

Positions 1-74 (MGTGLRSQSL…VPGSLGDTEQ (74 aa)) are disordered.

This is an uncharacterized protein from Homo sapiens (Human).